Here is a 298-residue protein sequence, read N- to C-terminus: 4-hydroxy-tetrahydrodipicolinate synthase (298 aa).

T51 is a binding site for pyruvate. The Proton donor/acceptor role is filled by Y139. K167 acts as the Schiff-base intermediate with substrate in catalysis. I209 lines the pyruvate pocket.

It belongs to the DapA family. Homotetramer; dimer of dimers.

It localises to the cytoplasm. It carries out the reaction L-aspartate 4-semialdehyde + pyruvate = (2S,4S)-4-hydroxy-2,3,4,5-tetrahydrodipicolinate + H2O + H(+). It participates in amino-acid biosynthesis; L-lysine biosynthesis via DAP pathway; (S)-tetrahydrodipicolinate from L-aspartate: step 3/4. In terms of biological role, catalyzes the condensation of (S)-aspartate-beta-semialdehyde [(S)-ASA] and pyruvate to 4-hydroxy-tetrahydrodipicolinate (HTPA). The protein is 4-hydroxy-tetrahydrodipicolinate synthase of Pasteurella multocida (strain Pm70).